The chain runs to 270 residues: 27 kDa core protein (270 aa).

The protein belongs to the chordopoxvirinae D3 family.

The protein localises to the virion. In terms of biological role, late protein which is part of a large complex required for early virion morphogenesis. This complex participates in the formation of virosomes and the incorporation of virosomal contents into nascent immature virions. This chain is 27 kDa core protein, found in Vertebrata (FPV).